A 68-amino-acid polypeptide reads, in one-letter code: ATP synthase F(0) complex subunit 8 (68 aa).

The chain crosses the membrane as a helical span at residues 8-24; that stretch reads TWFTTILSMFLTLFIIF. Lys-54 carries the N6-acetyllysine; alternate modification. Lys-54 bears the N6-succinyllysine; alternate mark. An N6-acetyllysine modification is found at Lys-57.

The protein belongs to the ATPase protein 8 family. Component of the ATP synthase complex composed at least of ATP5F1A/subunit alpha, ATP5F1B/subunit beta, ATP5MC1/subunit c (homooctomer), MT-ATP6/subunit a, MT-ATP8/subunit 8, ATP5ME/subunit e, ATP5MF/subunit f, ATP5MG/subunit g, ATP5MK/subunit k, ATP5MJ/subunit j, ATP5F1C/subunit gamma, ATP5F1D/subunit delta, ATP5F1E/subunit epsilon, ATP5PF/subunit F6, ATP5PB/subunit b, ATP5PD/subunit d, ATP5PO/subunit OSCP. ATP synthase complex consists of a soluble F(1) head domain (subunits alpha(3) and beta(3)) - the catalytic core - and a membrane F(0) domain - the membrane proton channel (subunits c, a, 8, e, f, g, k and j). These two domains are linked by a central stalk (subunits gamma, delta, and epsilon) rotating inside the F1 region and a stationary peripheral stalk (subunits F6, b, d, and OSCP). Interacts with PRICKLE3.

Its subcellular location is the mitochondrion membrane. Its function is as follows. Subunit 8, of the mitochondrial membrane ATP synthase complex (F(1)F(0) ATP synthase or Complex V) that produces ATP from ADP in the presence of a proton gradient across the membrane which is generated by electron transport complexes of the respiratory chain. ATP synthase complex consist of a soluble F(1) head domain - the catalytic core - and a membrane F(1) domain - the membrane proton channel. These two domains are linked by a central stalk rotating inside the F(1) region and a stationary peripheral stalk. During catalysis, ATP synthesis in the catalytic domain of F(1) is coupled via a rotary mechanism of the central stalk subunits to proton translocation. In vivo, can only synthesize ATP although its ATP hydrolase activity can be activated artificially in vitro. Part of the complex F(0) domain. The sequence is that of ATP synthase F(0) complex subunit 8 from Hippopotamus amphibius (Hippopotamus).